A 496-amino-acid polypeptide reads, in one-letter code: Apulose kinase (496 aa).

ATP is bound by residues 13–15 (TTN), threonine 267, glycine 308, and 408–412 (GATQN).

This sequence belongs to the FGGY kinase family.

The enzyme catalyses apulose + ATP = apulose 4-phosphate + ADP + H(+). It participates in carbohydrate metabolism. In terms of biological role, involved in catabolism of D-apiose. Catalyzes phosphorylation of apulose to form apulose 4-phosphate. The sequence is that of Apulose kinase from Pectobacterium atrosepticum (strain SCRI 1043 / ATCC BAA-672) (Erwinia carotovora subsp. atroseptica).